Consider the following 153-residue polypeptide: Aspartate carbamoyltransferase regulatory chain (153 aa).

The Zn(2+) site is built by cysteine 109, cysteine 114, cysteine 138, and cysteine 141.

The protein belongs to the PyrI family. In terms of assembly, contains catalytic and regulatory chains. Requires Zn(2+) as cofactor.

Functionally, involved in allosteric regulation of aspartate carbamoyltransferase. The chain is Aspartate carbamoyltransferase regulatory chain from Salmonella newport (strain SL254).